The primary structure comprises 107 residues: Iron-binding protein IscA (107 aa).

Fe cation contacts are provided by Cys35, Cys99, and Cys101.

It belongs to the HesB/IscA family. In terms of assembly, homodimer; may form tetramers and higher multimers. It depends on Fe cation as a cofactor.

Is able to transfer iron-sulfur clusters to apo-ferredoxin. Multiple cycles of [2Fe2S] cluster formation and transfer are observed, suggesting that IscA acts catalytically. Recruits intracellular free iron so as to provide iron for the assembly of transient iron-sulfur cluster in IscU in the presence of IscS, L-cysteine and the thioredoxin reductase system TrxA/TrxB. This chain is Iron-binding protein IscA, found in Enterobacter sp. (strain 638).